A 394-amino-acid polypeptide reads, in one-letter code: Phosphoglycerate kinase (394 aa).

Residues 21-23 (DFN), arginine 36, 59-62 (HLGR), arginine 118, and arginine 151 each bind substrate. Residue serine 183 is modified to Phosphoserine. Positions 201 and 292 each coordinate ATP. At threonine 299 the chain carries Phosphothreonine. ATP is bound by residues glutamate 323 and 350–353 (GGDS).

This sequence belongs to the phosphoglycerate kinase family. As to quaternary structure, monomer.

The protein localises to the cytoplasm. It carries out the reaction (2R)-3-phosphoglycerate + ATP = (2R)-3-phospho-glyceroyl phosphate + ADP. It functions in the pathway carbohydrate degradation; glycolysis; pyruvate from D-glyceraldehyde 3-phosphate: step 2/5. This chain is Phosphoglycerate kinase, found in Anoxybacillus flavithermus (strain DSM 21510 / WK1).